The sequence spans 98 residues: Cystatin-B (98 aa).

Met1 carries the post-translational modification N-acetylmethionine. Residues 46–50 (QLVAG) carry the Secondary area of contact motif.

This sequence belongs to the cystatin family. In terms of assembly, able to form dimers stabilized by noncovalent forces.

Its subcellular location is the cytoplasm. Its function is as follows. This is an intracellular thiol proteinase inhibitor. This Ovis aries (Sheep) protein is Cystatin-B (CSTB).